Consider the following 101-residue polypeptide: uncharacterized protein (101 aa).

A helical membrane pass occupies residues 77–99 (VFSFMNGFTDGCICGTIIILCLI).

Its subcellular location is the membrane. This is an uncharacterized protein from Acanthamoeba polyphaga mimivirus (APMV).